The sequence spans 696 residues: Carotenoid dioxygenase carX (696 aa).

Over residues 1-16 (MKFLQQNSFTQTSMSQ) the composition is skewed to polar residues. The disordered stretch occupies residues 1–27 (MKFLQQNSFTQTSMSQPHEDVSPPLRH). Residues H244, H298, H361, and H642 each contribute to the Fe(2+) site.

It belongs to the carotenoid oxygenase family. The cofactor is Fe(2+).

The catalysed reaction is all-trans-beta-carotene + O2 = 2 all-trans-retinal. It participates in carotenoid biosynthesis. Its function is as follows. Carotenoid dioxygenase; part of the car gene cluster that mediates the biosynthesis of neurosporaxanthin, a carboxylic apocarotenoid acting as an essential protective pigments and leading to orange pigmentation. CarX mediates the cleavage of beta-carotene produced by carAR into retinal, the rhodopsin's chromophore that is involved in the regulation of the carotenoid biosynthetic pathway via a negative feedback mechanism. It can also convert the synthetic compound beta-apo-8'-carotenal but not C35-apocarotenoids such as the acidic apocarotenoid neurosporaxanthin (C35), as well as its corresponding aldehyde beta-apo-4'-carotenal. This chain is Carotenoid dioxygenase carX, found in Gibberella fujikuroi (strain CBS 195.34 / IMI 58289 / NRRL A-6831) (Bakanae and foot rot disease fungus).